The primary structure comprises 635 residues: Probable potassium transport system protein Kup (635 aa).

Transmembrane regions (helical) follow at residues 20–40, 62–82, 111–131, 149–169, 180–200, 223–243, 259–279, 292–312, 349–369, 377–397, 408–428, and 429–449; these read MALV…SPLY, VLSL…VTII, AYVV…DGVI, PSLH…VFMV, VFGP…IWNI, GWHG…GEAL, WYFF…ALVL, AVPS…AVIA, IYVP…VLIF, VAYG…LALV, WVLP…IANG, and AKLL…FTLM.

Belongs to the HAK/KUP transporter (TC 2.A.72) family.

It is found in the cell inner membrane. It carries out the reaction K(+)(in) + H(+)(in) = K(+)(out) + H(+)(out). Transport of potassium into the cell. Likely operates as a K(+):H(+) symporter. The chain is Probable potassium transport system protein Kup from Xanthomonas campestris pv. campestris (strain 8004).